A 459-amino-acid polypeptide reads, in one-letter code: Cysteine--tRNA ligase (459 aa).

Cys-28 is a binding site for Zn(2+). A 'HIGH' region motif is present at residues 30 to 40 (ITIYDLCHIGH). Cys-209, His-234, and Glu-238 together coordinate Zn(2+). The 'KMSKS' region signature appears at 266-270 (KMSKS). Lys-269 is an ATP binding site.

It belongs to the class-I aminoacyl-tRNA synthetase family. In terms of assembly, monomer. The cofactor is Zn(2+).

It is found in the cytoplasm. It catalyses the reaction tRNA(Cys) + L-cysteine + ATP = L-cysteinyl-tRNA(Cys) + AMP + diphosphate. This Shewanella sediminis (strain HAW-EB3) protein is Cysteine--tRNA ligase.